We begin with the raw amino-acid sequence, 77 residues long: Large ribosomal subunit protein bL28 (77 aa).

The protein belongs to the bacterial ribosomal protein bL28 family.

This is Large ribosomal subunit protein bL28 from Delftia acidovorans (strain DSM 14801 / SPH-1).